The following is a 244-amino-acid chain: Lipoprotein-releasing system ATP-binding protein LolD (244 aa).

Residues 19–244 (IRAEALAKTY…KLRELAPSAV (226 aa)) form the ABC transporter domain. 55–62 (GASGAGKS) contributes to the ATP binding site.

This sequence belongs to the ABC transporter superfamily. Lipoprotein translocase (TC 3.A.1.125) family. The complex is composed of two ATP-binding proteins (LolD) and two transmembrane proteins (LolC and LolE).

Its subcellular location is the cell inner membrane. In terms of biological role, part of the ABC transporter complex LolCDE involved in the translocation of mature outer membrane-directed lipoproteins, from the inner membrane to the periplasmic chaperone, LolA. Responsible for the formation of the LolA-lipoprotein complex in an ATP-dependent manner. This Xanthomonas euvesicatoria pv. vesicatoria (strain 85-10) (Xanthomonas campestris pv. vesicatoria) protein is Lipoprotein-releasing system ATP-binding protein LolD.